Consider the following 445-residue polypeptide: Serine protease inhibitor A3F (445 aa).

N-linked (GlcNAc...) asparagine glycans are attached at residues N28, N94, N174, and N259. Residues 357–382 form an RCL region; it reads GTEAAAGTGYQNLQCCQGVIYSMKIY.

This sequence belongs to the serpin family.

This chain is Serine protease inhibitor A3F (Serpina3f), found in Mus musculus (Mouse).